Reading from the N-terminus, the 317-residue chain is Ribosomal RNA small subunit methyltransferase H (317 aa).

Residues 39-41 (GGH), Asp-59, Phe-83, Asp-104, and Gln-111 each bind S-adenosyl-L-methionine.

It belongs to the methyltransferase superfamily. RsmH family.

The protein resides in the cytoplasm. The enzyme catalyses cytidine(1402) in 16S rRNA + S-adenosyl-L-methionine = N(4)-methylcytidine(1402) in 16S rRNA + S-adenosyl-L-homocysteine + H(+). In terms of biological role, specifically methylates the N4 position of cytidine in position 1402 (C1402) of 16S rRNA. The chain is Ribosomal RNA small subunit methyltransferase H from Paraburkholderia phymatum (strain DSM 17167 / CIP 108236 / LMG 21445 / STM815) (Burkholderia phymatum).